Reading from the N-terminus, the 173-residue chain is Alpha-crystallin A chain (173 aa).

The residue at position 1 (Met-1) is an N-acetylmethionine. The required for complex formation with BFSP1 and BFSP2 stretch occupies residues 1–63 (MDIAIQHPWF…RTVLDSGISE (63 aa)). At Gln-6 the chain carries Deamidated glutamine; partial. Ser-45 carries the phosphoserine modification. Gln-50 carries the deamidated glutamine; partial modification. The sHSP domain occupies 52 to 162 (LFRTVLDSGI…GHSERAIPVS (111 aa)). Lys-70 is subject to N6-acetyllysine. Gln-90 carries the deamidated glutamine; partial modification. An N6-acetyllysine modification is found at Lys-99. His-100 lines the Zn(2+) pocket. A Deamidated asparagine; partial modification is found at Asn-101. Zn(2+) is bound by residues Glu-102 and His-107. Residue Ser-122 is modified to Phosphoserine. At Asn-123 the chain carries Deamidated asparagine; partial. Residues 144 to 173 (PKVPSGVDAGHSERAIPVSREEKPSSAPSS) form a disordered region. Residues 153–167 (GHSERAIPVSREEKP) are compositionally biased toward basic and acidic residues. His-154 is a Zn(2+) binding site. A glycan (O-linked (GlcNAc) serine) is linked at Ser-162.

The protein belongs to the small heat shock protein (HSP20) family. As to quaternary structure, heteromer composed of three CRYAA and one CRYAB subunits. Inter-subunit bridging via zinc ions enhances stability, which is crucial as there is no protein turn over in the lens. Can also form homodimers and homotetramers (dimers of dimers) which serve as the building blocks of homooligomers. Within homooligomers, the zinc-binding motif is created from residues of 3 different molecules. His-100 and Glu-102 from one molecule are ligands of the zinc ion, and His-107 and His-154 residues from additional molecules complete the site with tetrahedral coordination geometry. Part of a complex required for lens intermediate filament formation composed of BFSP1, BFSP2 and CRYAA. Acetylation at Lys-70 may increase chaperone activity. In terms of processing, undergoes age-dependent proteolytical cleavage at the C-terminus.

It localises to the cytoplasm. It is found in the nucleus. Functionally, contributes to the transparency and refractive index of the lens. Acts as a chaperone, preventing aggregation of various proteins under a wide range of stress conditions. Required for the correct formation of lens intermediate filaments as part of a complex composed of BFSP1, BFSP2 and CRYAA. The chain is Alpha-crystallin A chain (CRYAA) from Pteropus poliocephalus (Grey-headed flying fox).